The primary structure comprises 169 residues: Protein-export protein SecB (169 aa).

The protein belongs to the SecB family. As to quaternary structure, homotetramer, a dimer of dimers. One homotetramer interacts with 1 SecA dimer.

It localises to the cytoplasm. Functionally, one of the proteins required for the normal export of preproteins out of the cell cytoplasm. It is a molecular chaperone that binds to a subset of precursor proteins, maintaining them in a translocation-competent state. It also specifically binds to its receptor SecA. This is Protein-export protein SecB from Mannheimia succiniciproducens (strain KCTC 0769BP / MBEL55E).